The following is a 665-amino-acid chain: Pentatricopeptide repeat-containing protein At1g04840 (665 aa).

PPR repeat units follow at residues 90 to 124 (NPFVLNALIRGLTENARFESSVRHFILMLRLGVKP), 125 to 155 (DRLTFPFVLKSNSKLGFRWLGRALHAATLKN), 160 to 190 (DSFVRLSLVDMYAKTGQLKHAFQVFEESPDR), 195 to 229 (SILIWNVLINGYCRAKDMHMATTLFRSMPERNSGS), 230 to 256 (WSTLIKGYVDSGELNRAKQLFELMPEK), 257 to 291 (NVVSWTTLINGFSQTGDYETAISTYFEMLEKGLKP), 292 to 326 (NEYTIAAVLSACSKSGALGSGIRIHGYILDNGIKL), 327 to 357 (DRAIGTALVDMYAKCGELDCAATVFSNMNHK), 358 to 392 (DILSWTAMIQGWAVHGRFHQAIQCFRQMMYSGEKP), 393 to 423 (DEVVFLAVLTACLNSSEVDLGLNFFDSMRLD), and 429 to 459 (TLKHYVLVVDLLGRAGKLNEAHELVENMPIN). Residues 464 to 539 (TWAALYRACK…SLGWSYIELD (76 aa)) are type E motif. The interval 540-570 (GQLNKFSAGDYSHKLTQEIGLKLDEIISLAI) is type E(+) motif. Positions 571-665 (QKGYNPGADW…DGRCSCGDYW (95 aa)) are type DYW motif.

The protein belongs to the PPR family. PCMP-H subfamily.

The polypeptide is Pentatricopeptide repeat-containing protein At1g04840 (PCMP-H64) (Arabidopsis thaliana (Mouse-ear cress)).